The following is a 649-amino-acid chain: Transcription factor tau 95 kDa subunit (649 aa).

Positions 1 to 21 are disordered; that stretch reads MPVEEPLATLSSIPDSSADQA. The span at 9–19 shows a compositional bias: polar residues; sequence TLSSIPDSSAD. Repeat unit 1 spans residues 221–239; that stretch reads PSTDFQLPPPPKLSMVGFP. A 2 X repeats, Pro-rich region spans residues 221 to 419; sequence PSTDFQLPPP…PPLVFESDTP (199 aa). The short motif at 296 to 300 is the Nuclear localization signal element; that stretch reads AKKTK. Repeat 2 spans residues 400–419; it reads PIVKKNVPKPPPLVFESDTP. Residues 556 to 612 are disordered; it reads IAAGDDFDDNGAITEEPDDAALENEEMDTDQNLKVPASIDDDVDDVDADEEEQESFD. Acidic residues-rich tracts occupy residues 560 to 584 and 594 to 610; these read DDFD…EMDT and IDDD…EQES. Residue Ser-617 is modified to Phosphoserine.

The protein belongs to the TFIIIC subunit 5 family. As to quaternary structure, component of the TFIIIC complex composed of TFC1, TFC3, TFC4, TFC6, TFC7 and TFC8. The subunits are organized in two globular domains, tauA and tauB, connected by a proteolysis-sensitive and flexible linker. Interacts with TFC3, TFC4 and TFC6.

It is found in the nucleus. Its function is as follows. TFIIIC mediates tRNA and 5S RNA gene activation by binding to intragenic promoter elements. Upstream of the transcription start site, TFIIIC assembles the initiation complex TFIIIB-TFIIIC-tDNA, which is sufficient for RNA polymerase III recruitment and function. Part of the tauA domain of TFIIIC that binds boxA DNA promoter sites of tRNA and similar genes. Participates in the interconnection of tauA with tauB via its contacts with TFC3 and TFC6. Serves as a scaffold critical for tauA-DNA spatial configuration and tauB-DNA stability. This chain is Transcription factor tau 95 kDa subunit (TFC1), found in Saccharomyces cerevisiae (strain ATCC 204508 / S288c) (Baker's yeast).